The sequence spans 381 residues: Sterol 24-C-methyltransferase ERG6A (381 aa).

This sequence belongs to the class I-like SAM-binding methyltransferase superfamily. Erg6/SMT family.

The catalysed reaction is lanosterol + S-adenosyl-L-methionine = eburicol + S-adenosyl-L-homocysteine + H(+). The protein operates within steroid metabolism; ergosterol biosynthesis. Sterol 24-C-methyltransferase; part of the third module of ergosterol biosynthesis pathway that includes the late steps of the pathway. ERG6A and ERG6B methylate lanosterol at C-24 to produce eburicol. The third module or late pathway involves the ergosterol synthesis itself through consecutive reactions that mainly occur in the endoplasmic reticulum (ER) membrane. Firstly, the squalene synthase ERG9 catalyzes the condensation of 2 farnesyl pyrophosphate moieties to form squalene, which is the precursor of all steroids. Squalene synthase is crucial for balancing the incorporation of farnesyl diphosphate (FPP) into sterol and nonsterol isoprene synthesis. Secondly, squalene is converted into lanosterol by the consecutive action of the squalene epoxidase ERG1 and the lanosterol synthase ERG7. Then, the delta(24)-sterol C-methyltransferase ERG6 methylates lanosterol at C-24 to produce eburicol. Eburicol is the substrate of the sterol 14-alpha demethylase encoded by CYP51A, CYP51B and CYP51C, to yield 4,4,24-trimethyl ergosta-8,14,24(28)-trienol. CYP51B encodes the enzyme primarily responsible for sterol 14-alpha-demethylation, and plays an essential role in ascospore formation. CYP51A encodes an additional sterol 14-alpha-demethylase, induced on ergosterol depletion and responsible for the intrinsic variation in azole sensitivity. The third CYP51 isoform, CYP51C, does not encode a sterol 14-alpha-demethylase, but is required for full virulence on host wheat ears. The C-14 reductase ERG24 then reduces the C14=C15 double bond which leads to 4,4-dimethylfecosterol. A sequence of further demethylations at C-4, involving the C-4 demethylation complex containing the C-4 methylsterol oxidases ERG25, the sterol-4-alpha-carboxylate 3-dehydrogenase ERG26 and the 3-keto-steroid reductase ERG27, leads to the production of fecosterol via 4-methylfecosterol. ERG28 has a role as a scaffold to help anchor ERG25, ERG26 and ERG27 to the endoplasmic reticulum. The C-8 sterol isomerase ERG2 then catalyzes the reaction which results in unsaturation at C-7 in the B ring of sterols and thus converts fecosterol to episterol. The sterol-C5-desaturases ERG3A and ERG3BB then catalyze the introduction of a C-5 double bond in the B ring to produce 5-dehydroepisterol. The C-22 sterol desaturases ERG5A and ERG5B further convert 5-dehydroepisterol into ergosta-5,7,22,24(28)-tetraen-3beta-ol by forming the C-22(23) double bond in the sterol side chain. Finally, ergosta-5,7,22,24(28)-tetraen-3beta-ol is substrate of the C-24(28) sterol reductase ERG4 to produce ergosterol. The sequence is that of Sterol 24-C-methyltransferase ERG6A (FG02783.1) from Gibberella zeae (strain ATCC MYA-4620 / CBS 123657 / FGSC 9075 / NRRL 31084 / PH-1) (Wheat head blight fungus).